A 401-amino-acid chain; its full sequence is MDENNHGVSSSSLPPFLTKTYEMVDDSSSDSIVSWSQSNKSFIVWNPPEFSRDLLPRFFKHNNFSSFIRQLNTYGFRKADPEQWEFANDDFVRGQPHLMKNIHRRKPVHSHSLPNLQAQLNPLTDSERVRMNNQIERLTKEKEGLLEELHKQDEEREVFEMQVKELKERLQHMEKRQKTMVSFVSQVLEKPGLALNLSPCVPETNERKRRFPRIEFFPDEPMLEENKTCVVVREEGSTSPSSHTREHQVEQLESSIAIWENLVSDSCESMLQSRSMMTLDVDESSTFPESPPLSCIQLSVDSRLKSPPSPRIIDMNCEPDGSKEQNTVAAPPPPPVAGANDGFWQQFFSENPGSTEQREVQLERKDDKDKAGVRTEKCWWNSRNVNAITEQLGHLTSSERS.

The DNA-binding element occupies 13–107; it reads LPPFLTKTYE…LMKNIHRRKP (95 aa). The hydrophobic repeat HR-A/B stretch occupies residues 122–188; it reads PLTDSERVRM…TMVSFVSQVL (67 aa). A Nuclear localization signal motif is present at residues 207–213; it reads RKRRFPR. The short motif at 256-265 is the AHA1 element; sequence IAIWENLVSD. Residues 341–350 carry the AHA2 motif; it reads DGFWQQFFSE. A disordered region spans residues 351–373; it reads NPGSTEQREVQLERKDDKDKAGV. The segment covering 356 to 373 has biased composition (basic and acidic residues); that stretch reads EQREVQLERKDDKDKAGV. A Nuclear export signal motif is present at residues 388–395; that stretch reads ITEQLGHL.

The protein belongs to the HSF family. Class A subfamily. As to quaternary structure, homotrimer. Exhibits temperature-dependent phosphorylation.

It localises to the cytoplasm. It is found in the nucleus. Functionally, transcriptional activator that specifically binds DNA sequence 5'-AGAAnnTTCT-3' known as heat shock promoter elements (HSE). The protein is Heat stress transcription factor A-4a (HSFA4A) of Arabidopsis thaliana (Mouse-ear cress).